We begin with the raw amino-acid sequence, 102 residues long: Fe-S protein maturation auxiliary factor YitW (102 aa).

This sequence belongs to the MIP18 family.

In terms of biological role, involved in the maturation of iron-sulfur (Fe-S) proteins. May function as a Fe-S cluster carrier. This Bacillus subtilis (strain 168) protein is Fe-S protein maturation auxiliary factor YitW (yitW).